The following is a 185-amino-acid chain: NADH-quinone oxidoreductase subunit B (185 aa).

The [4Fe-4S] cluster site is built by cysteine 38, cysteine 39, cysteine 104, and cysteine 133. The segment covering 165 to 176 (AAEAYREEERQA) has biased composition (basic and acidic residues). Residues 165–185 (AAEAYREEERQAARSALGPRS) are disordered.

This sequence belongs to the complex I 20 kDa subunit family. As to quaternary structure, NDH-1 is composed of 14 different subunits. Subunits NuoB, C, D, E, F, and G constitute the peripheral sector of the complex. Requires [4Fe-4S] cluster as cofactor.

The protein localises to the cell membrane. It catalyses the reaction a quinone + NADH + 5 H(+)(in) = a quinol + NAD(+) + 4 H(+)(out). Its function is as follows. NDH-1 shuttles electrons from NADH, via FMN and iron-sulfur (Fe-S) centers, to quinones in the respiratory chain. The immediate electron acceptor for the enzyme in this species is believed to be ubiquinone. Couples the redox reaction to proton translocation (for every two electrons transferred, four hydrogen ions are translocated across the cytoplasmic membrane), and thus conserves the redox energy in a proton gradient. This chain is NADH-quinone oxidoreductase subunit B, found in Thermomicrobium roseum (strain ATCC 27502 / DSM 5159 / P-2).